A 155-amino-acid chain; its full sequence is MMKITILTVGKLGRMVEAQLALDYASRATASGRALALGPVDILEVEARKPGKAAEAEVLRPHLEGAYVVACDEHGKAWKSRAFADHLARLRDDGNRRVVFLIGGADGLDPSILAAANETMAFGVQTWPHALARAMLAEQIYRAATILSGSPYHRD.

Gly-103 is an S-adenosyl-L-methionine binding site.

It belongs to the RNA methyltransferase RlmH family. In terms of assembly, homodimer.

The protein localises to the cytoplasm. It carries out the reaction pseudouridine(1915) in 23S rRNA + S-adenosyl-L-methionine = N(3)-methylpseudouridine(1915) in 23S rRNA + S-adenosyl-L-homocysteine + H(+). In terms of biological role, specifically methylates the pseudouridine at position 1915 (m3Psi1915) in 23S rRNA. This is Ribosomal RNA large subunit methyltransferase H from Caulobacter vibrioides (strain ATCC 19089 / CIP 103742 / CB 15) (Caulobacter crescentus).